Reading from the N-terminus, the 254-residue chain is 3-oxo-5-alpha-steroid 4-dehydrogenase 2 (254 aa).

4 helical membrane passes run 8 to 28 (VPVL…LCLG), 72 to 92 (PRSL…AHYF), 146 to 166 (FSFG…SDYT), and 206 to 226 (LATW…FLGM).

This sequence belongs to the steroid 5-alpha reductase family. As to expression, expressed in high levels in the prostate and many other androgen-sensitive tissues.

The protein localises to the microsome membrane. The protein resides in the endoplasmic reticulum membrane. The enzyme catalyses a 3-oxo-5alpha-steroid + NADP(+) = a 3-oxo-Delta(4)-steroid + NADPH + H(+). The catalysed reaction is 17beta-hydroxy-5alpha-androstan-3-one + NADP(+) = testosterone + NADPH + H(+). It catalyses the reaction 5alpha-pregnane-3,20-dione + NADP(+) = progesterone + NADPH + H(+). Its function is as follows. Converts testosterone (T) into 5-alpha-dihydrotestosterone (DHT) and progesterone or corticosterone into their corresponding 5-alpha-3-oxosteroids. It plays a central role in sexual differentiation and androgen physiology. The protein is 3-oxo-5-alpha-steroid 4-dehydrogenase 2 (Srd5a2) of Rattus norvegicus (Rat).